The primary structure comprises 279 residues: uncharacterized protein (279 aa).

Positions 136–279 (TSNATEASEK…FTSDSSDEED (144 aa)) are disordered. The span at 228-238 (NNGNGAVYSDS) shows a compositional bias: low complexity.

This is an uncharacterized protein from Invertebrate iridescent virus 3 (IIV-3).